We begin with the raw amino-acid sequence, 438 residues long: Glutaryl-CoA dehydrogenase, mitochondrial (438 aa).

The transit peptide at 1 to 44 directs the protein to the mitochondrion; it reads MALRGVSVRLLSRGPGLHVLRTWVSSAAQTEKGGRTQSQLAKSS. Residues 138 to 139 and Ser186 contribute to the substrate site; that span reads RS. FAD is bound by residues 177 to 186 and 212 to 214; these read FGLTEPNSGS and WIT. At Lys240 the chain carries N6-acetyllysine. Residue 287–294 participates in substrate binding; that stretch reads FGCLNNAR. Residues Arg319, Gln330, and 387–391 contribute to the FAD site; that span reads DMLGG. Catalysis depends on Glu414, which acts as the Proton acceptor. Gly415 is a binding site for substrate. Residues 416–418 and Phe434 contribute to the FAD site; that span reads THD.

It belongs to the acyl-CoA dehydrogenase family. Homotetramer. It depends on FAD as a cofactor. Isoform Long and isoform Short are expressed in fibroblasts and liver.

Its subcellular location is the mitochondrion matrix. It carries out the reaction glutaryl-CoA + oxidized [electron-transfer flavoprotein] + 2 H(+) = (2E)-butenoyl-CoA + reduced [electron-transfer flavoprotein] + CO2. It participates in amino-acid metabolism; lysine degradation. Its pathway is amino-acid metabolism; tryptophan metabolism. With respect to regulation, strongly inhibited by MCPA-CoA, a metabolite of hypoglycin which is present in unripened fruit of the ackee tree. Functionally, catalyzes the oxidative decarboxylation of glutaryl-CoA to crotonyl-CoA and CO(2) in the degradative pathway of L-lysine, L-hydroxylysine, and L-tryptophan metabolism. It uses electron transfer flavoprotein as its electron acceptor. Isoform Short is inactive. The polypeptide is Glutaryl-CoA dehydrogenase, mitochondrial (GCDH) (Homo sapiens (Human)).